Reading from the N-terminus, the 329-residue chain is Beta-tectorin (329 aa).

Positions 1 to 17 (MVTKAFVLLAIFAEASA) are cleaved as a signal peptide. Positions 19-283 (SCAPNKADVI…LSCPVTCDKR (265 aa)) constitute a ZP domain. N-linked (GlcNAc...) asparagine glycans are attached at residues asparagine 80, asparagine 104, asparagine 116, and asparagine 145. Residues cysteine 204 and cysteine 264 are joined by a disulfide bond. The GPI-anchor amidated glycine moiety is linked to residue glycine 305. A propeptide spans 306 to 329 (FSSLYSFSDVLHHLIMMLGICAVL) (removed in mature form).

As to quaternary structure, may form homomeric filament after self-association or heteromeric filament after association with alpha-tectorin. Interacts with CEACAM16. In terms of processing, the presence of a hydrophobic C-terminus preceded by a potential cleavage site strongly suggests that tectorins are synthesized as glycosylphosphatidylinositol-linked, membrane-bound precursors. Tectorins are targeted to the apical surface of the inner ear epithelia by the lipid and proteolytically released into the extracellular compartment.

The protein resides in the cell membrane. It is found in the secreted. Its subcellular location is the extracellular space. It localises to the extracellular matrix. One of the major non-collagenous components of the tectorial membrane. The tectorial membrane is an extracellular matrix of the inner ear that covers the neuroepithelium of the cochlea and contacts the stereocilia bundles of specialized sensory hair cells. Sound induces movement of these hair cells relative to the tectorial membrane, deflects the stereocilia and leads to fluctuations in hair-cell membrane potential, transducing sound into electrical signals. This is Beta-tectorin (TECTB) from Homo sapiens (Human).